Reading from the N-terminus, the 261-residue chain is CD40 ligand (261 aa).

Residues 1–22 lie on the Cytoplasmic side of the membrane; sequence MIETYNQPVPRSAATGPPVSMK. A helical; Signal-anchor for type II membrane protein transmembrane segment spans residues 23–43; that stretch reads IFMYLLTVFLITQMIGSALFA. Over 44–261 the chain is Extracellular; that stretch reads VYLHRRLDKI…GFTSFGLLKL (218 aa). Residues 122–261 form the THD domain; it reads IAAHVISEAS…GFTSFGLLKL (140 aa). Cys178 and Cys218 are disulfide-bonded. N-linked (GlcNAc...) asparagine glycosylation occurs at Asn240.

It belongs to the tumor necrosis factor family. In terms of assembly, homotrimer. Interacts with CD28. CD40 ligand, soluble form: Exists as either a monomer or a homotrimer. Forms a ternary complex between CD40 and integrins for CD40-CD40LG signaling. In terms of processing, the soluble form derives from the membrane form by proteolytic processing.

The protein resides in the cell membrane. It is found in the cell surface. Its subcellular location is the secreted. Its function is as follows. Cytokine that acts as a ligand to CD40/TNFRSF5. Costimulates T-cell proliferation and cytokine production. Its cross-linking on T-cells generates a costimulatory signal which enhances the production of IL4 and IL10 in conjunction with the TCR/CD3 ligation and CD28 costimulation. Induces the activation of NF-kappa-B. Induces the activation of kinases MAPK8 and PAK2 in T-cells. Mediates B-cell proliferation in the absence of co-stimulus as well as IgE production in the presence of IL4. Involved in immunoglobulin class switching. In terms of biological role, acts as a ligand for integrins, specifically ITGA5:ITGB1 and ITGAV:ITGB3; both integrins and the CD40 receptor are required for activation of CD40-CD40LG signaling, which have cell-type dependent effects, such as B-cell activation, NF-kappa-B signaling and anti-apoptotic signaling. This chain is CD40 ligand (CD40LG), found in Callithrix jacchus (White-tufted-ear marmoset).